The following is a 428-amino-acid chain: Trigger factor (428 aa).

One can recognise a PPIase FKBP-type domain in the interval glycine 163–proline 248.

Belongs to the FKBP-type PPIase family. Tig subfamily.

The protein resides in the cytoplasm. It catalyses the reaction [protein]-peptidylproline (omega=180) = [protein]-peptidylproline (omega=0). Its function is as follows. Involved in protein export. Acts as a chaperone by maintaining the newly synthesized protein in an open conformation. Functions as a peptidyl-prolyl cis-trans isomerase. This is Trigger factor from Acetivibrio thermocellus (strain ATCC 27405 / DSM 1237 / JCM 9322 / NBRC 103400 / NCIMB 10682 / NRRL B-4536 / VPI 7372) (Clostridium thermocellum).